The sequence spans 297 residues: tRNA dimethylallyltransferase (297 aa).

10 to 17 (APTGAGKT) contributes to the ATP binding site. 12-17 (TGAGKT) serves as a coordination point for substrate. The tract at residues 34 to 37 (DSRQ) is interaction with substrate tRNA.

This sequence belongs to the IPP transferase family. Monomer. Mg(2+) is required as a cofactor.

The catalysed reaction is adenosine(37) in tRNA + dimethylallyl diphosphate = N(6)-dimethylallyladenosine(37) in tRNA + diphosphate. In terms of biological role, catalyzes the transfer of a dimethylallyl group onto the adenine at position 37 in tRNAs that read codons beginning with uridine, leading to the formation of N6-(dimethylallyl)adenosine (i(6)A). This Leptospira interrogans serogroup Icterohaemorrhagiae serovar Lai (strain 56601) protein is tRNA dimethylallyltransferase.